The sequence spans 1022 residues: Sodium/potassium-transporting ATPase subunit alpha-1 (1022 aa).

The propeptide occupies 1-5; that stretch reads MGRGT. Over residues 1-10 the composition is skewed to basic and acidic residues; that stretch reads MGRGTGHDQY. Residues 1–34 form a disordered region; it reads MGRGTGHDQYELAATSEGGRKKKRDKKKKDMDDL. The Cytoplasmic segment spans residues 6–86; that stretch reads GHDQYELAAT…NALTPPPTTP (81 aa). Ser-16 carries the phosphoserine; by PKC modification. The interval 81 to 83 is interaction with phosphoinositide-3 kinase; sequence PPP. The chain crosses the membrane as a helical span at residues 87–107; it reads EWVKFCRQLFGGFSMLLWIGA. Residues 108–130 lie on the Extracellular side of the membrane; that stretch reads ILCFLAYGIQAASEDEPANDNLY. A helical transmembrane segment spans residues 131–151; the sequence is LGVVLSAVVIITGCFSYYQEA. Residues 152–287 are Cytoplasmic-facing; sequence KSSRIMDSFK…VGRTPISIEI (136 aa). The segment at 213–234 is disordered; the sequence is DNSSLTGESEPQTRSPDFSNEN. The helical transmembrane segment at 288–307 threads the bilayer; sequence EHFIHIITGVAVFLGVSFFI. Over 308 to 319 the chain is Extracellular; the sequence is LSLILGYAWLEA. The chain crosses the membrane as a helical span at residues 320–337; sequence VIFLIGIIVANVPEGLLA. Topologically, residues 338–771 are cytoplasmic; sequence TVTVCLTLTA…EEGRLIFDNL (434 aa). Catalysis depends on Asp-375, which acts as the 4-aspartylphosphate intermediate. Lys-486 lines the ATP pocket. Mg(2+) is bound by residues Asp-716 and Asp-720. A helical transmembrane segment spans residues 772–791; that stretch reads KKSIAYTLTSNIPEITPFLL. Over 792 to 801 the chain is Extracellular; sequence FIIANIPLPL. A helical membrane pass occupies residues 802–822; that stretch reads GTVTILCIDLGTDMVPAISLA. Over 823–842 the chain is Cytoplasmic; sequence YEAAESDIMKRQPRNPRTDK. The helical transmembrane segment at 843–865 threads the bilayer; the sequence is LVNERLISIAYGQIGMMQATAGF. Over 866–917 the chain is Extracellular; the sequence is FTYFVILAENGFLPSTLLGIRVKWDDKYVNDLEDSYGQQWTYEQRKIVEYTC. Residues 918–937 traverse the membrane as a helical segment; the sequence is HTSFFASIVIVQWADLIICK. Residues 938–950 are Cytoplasmic-facing; it reads TRRNSIIQQGMKN. Phosphoserine; by PKA is present on Ser-942. Residues 951 to 969 form a helical membrane-spanning segment; the sequence is KILIFGLFEETALAAFLSY. At 970 to 984 the chain is on the extracellular side; the sequence is CPGMDVALRMYPLKP. A helical transmembrane segment spans residues 985-1005; the sequence is SWWFCAFPYSLLIFLYDEARR. Over 1006-1022 the chain is Cytoplasmic; that stretch reads FILRRNPDGWVERETYY.

The protein belongs to the cation transport ATPase (P-type) (TC 3.A.3) family. Type IIC subfamily. In terms of assembly, the sodium/potassium-transporting ATPase is composed of a catalytic alpha subunit, an auxiliary non-catalytic beta subunit and an additional regulatory subunit.

It localises to the cell membrane. The protein resides in the sarcolemma. The enzyme catalyses K(+)(out) + Na(+)(in) + ATP + H2O = K(+)(in) + Na(+)(out) + ADP + phosphate + H(+). Functionally, this is the catalytic component of the active enzyme, which catalyzes the hydrolysis of ATP coupled with the exchange of sodium and potassium ions across the plasma membrane. This action creates the electrochemical gradient of sodium and potassium ions, providing the energy for active transport of various nutrients. This is Sodium/potassium-transporting ATPase subunit alpha-1 (atp1a1) from Anguilla anguilla (European freshwater eel).